Consider the following 1040-residue polypeptide: MGFTVVSRSGSPTRRENQKRRVCFRLLLRLLRRGFVVLSAESDPKMPNYSIRGINVEFPFEAYQSQIIYMDRVIESLQNKCHALLESPTGTGKTLCLLCATLAWRKSLGSFSTRKDRKNSAIPWSDSDEPLSQSGGGGGGAFPTIVYASRTHSQLRQVIKELKRSSYRPKMVVLGSREQLCVNEEVNSLRGKALTNACQYLCKKRGKRQCNHFNRLPDYLKHNPHIGDEPVDIEDLVNIGKDSGPCPYYITRELHKDVDIIFAPYNYLISNGYRKFLKVNWTNSVLIFDEAHNLESLCADSASFDLPSVLLSACISEAQECVQLAAARRDSLNDVSINPENFAILKGLLLKLQELISKVPIPKRDEGFTKPGPYIYEMLKSLNITHETAPKLIGTVEEAAVFLEEEKQRTATNAGSKLEIIADMLKLIFRENGSNHADVYRVHVQELEQNSTDVMKGKVSRTLSWWCFSPGITMLDIAQKGVGSIILTSGTLSPMDSLAQELKLDFPIRLENPHVISSNQLWAGVVSTGPSGYVLNSSYRNRDVPEYKQELGNAIVNFSRVVPEGLLIFFPSYYLMDSCITFWKNGCYRNSMTVWERICKLKKPVIEPKDSSLFPAAMRDFSEKLQDRATSGVVFFAVCRGKVSEGLDFADGAGRAVVITGLPYARVTDPRVKLKREFLDEQSQLADVKLPRSTLLSGSMWYSQEAARAVNQAIGRVIRHRHDYGAIIFCDDRFEQPSQQSKISLWIRPNVKCYSRYGEVISDLARFFRTERSNFPARLVTEQENNIVSTLLPVESIEDNPTPAFGNSNLKNVGVAQNELSRLEAFPPANRASPLERDGNNVKRNGLTILKHTGKIPRIVKGDVMQGCSSRKAKLVELSDDEETPVERRCEVVDLESDNCETQTCVTEVLASSTCLNTMGLKKKRKVPESQGSASSSVLTAKGNGGGDKKEASASAFLSQVKEKLNTEEYKKFIGYMQALKKKEIKLANVMQSIVQLFCGSERDHLLMGFKDFVPVKYRPAYEECIKTRKRQSIIFGNSN.

Residues 52 to 355 (RGINVEFPFE…KGLLLKLQEL (304 aa)) enclose the Helicase ATP-binding domain. An ATP-binding site is contributed by 87-94 (SPTGTGKT). The interval 117-137 (RKNSAIPWSDSDEPLSQSGGG) is disordered. [4Fe-4S] cluster is bound by residues C181, C202, C210, and C246. Positions 289–292 (DEAH) match the DEAH box motif. Residues 926 to 949 (KVPESQGSASSSVLTAKGNGGGDK) are disordered. The segment covering 930–939 (SQGSASSSVL) has biased composition (polar residues). A PIP-box; degenerate motif is present at residues 992–999 (QSIVQLFC).

This sequence belongs to the helicase family. RAD3/XPD subfamily.

Its subcellular location is the nucleus. It carries out the reaction ATP + H2O = ADP + phosphate + H(+). In terms of biological role, a probable ATP-dependent DNA helicase implicated in DNA replication, DNA repair and the maintenance of genomic stability. Acts as an anti-recombinase to counteract toxic recombination and limit crossover during meiosis. Regulates meiotic recombination and crossover homeostasis by physically dissociating strand invasion events and thereby promotes noncrossover repair by meiotic synthesis dependent strand annealing (SDSA) as well as disassembly of D loop recombination intermediates. Also plays a role in preserving the stability of 45S rDNA repeats. The protein is Regulator of telomere elongation helicase 1 homolog of Arabidopsis thaliana (Mouse-ear cress).